The sequence spans 188 residues: Elongation factor P (188 aa).

Lysine 34 carries the N6-(3,6-diaminohexanoyl)-5-hydroxylysine modification.

This sequence belongs to the elongation factor P family. Post-translationally, may be beta-lysylated on the epsilon-amino group of Lys-34 by the combined action of EpmA and EpmB, and then hydroxylated on the C5 position of the same residue by EpmC (if this protein is present). Lysylation is critical for the stimulatory effect of EF-P on peptide-bond formation. The lysylation moiety may extend toward the peptidyltransferase center and stabilize the terminal 3-CCA end of the tRNA. Hydroxylation of the C5 position on Lys-34 may allow additional potential stabilizing hydrogen-bond interactions with the P-tRNA.

It is found in the cytoplasm. It functions in the pathway protein biosynthesis; polypeptide chain elongation. Its function is as follows. Involved in peptide bond synthesis. Alleviates ribosome stalling that occurs when 3 or more consecutive Pro residues or the sequence PPG is present in a protein, possibly by augmenting the peptidyl transferase activity of the ribosome. Modification of Lys-34 is required for alleviation. This Haemophilus influenzae (strain 86-028NP) protein is Elongation factor P.